The primary structure comprises 130 residues: Small ribosomal subunit protein uS8 (130 aa).

Belongs to the universal ribosomal protein uS8 family. As to quaternary structure, part of the 30S ribosomal subunit. Contacts proteins S5 and S12.

Functionally, one of the primary rRNA binding proteins, it binds directly to 16S rRNA central domain where it helps coordinate assembly of the platform of the 30S subunit. This is Small ribosomal subunit protein uS8 from Salmonella arizonae (strain ATCC BAA-731 / CDC346-86 / RSK2980).